Consider the following 956-residue polypeptide: GAS2-like protein 2B (956 aa).

The Calponin-homology (CH) domain occupies 23 to 150 (YAMKEDLAEW…CLLELARRAS (128 aa)). The 73-residue stretch at 191-263 (CDFKNLDQMV…HYLDKHDPCH (73 aa)) folds into the GAR domain. 2 stretches are compositionally biased toward polar residues: residues 332–353 (SSSY…QTPP) and 381–390 (DPQQLGNPQS). 4 disordered regions span residues 332-361 (SSSY…SMSI), 378-406 (DTQD…ASQL), 853-885 (RPKI…SRNN), and 914-956 (VNSE…ESWV). Residues 859–868 (RRDNRPEKKP) show a composition bias toward basic and acidic residues.

It belongs to the GAS2 family.

It localises to the cytoplasm. It is found in the cytoskeleton. Its subcellular location is the cilium basal body. Its function is as follows. Together with gas2l2.L, regulates ciliary orientation and performance. The polypeptide is GAS2-like protein 2B (Xenopus laevis (African clawed frog)).